A 1391-amino-acid polypeptide reads, in one-letter code: DNA-directed RNA polymerase subunit beta' (1391 aa).

Positions 72, 74, 87, and 90 each coordinate Zn(2+). Positions 462, 464, and 466 each coordinate Mg(2+). Positions 816, 890, 897, and 900 each coordinate Zn(2+).

This sequence belongs to the RNA polymerase beta' chain family. As to quaternary structure, the RNAP catalytic core consists of 2 alpha, 1 beta, 1 beta' and 1 omega subunit. When a sigma factor is associated with the core the holoenzyme is formed, which can initiate transcription. The cofactor is Mg(2+). Requires Zn(2+) as cofactor.

The catalysed reaction is RNA(n) + a ribonucleoside 5'-triphosphate = RNA(n+1) + diphosphate. DNA-dependent RNA polymerase catalyzes the transcription of DNA into RNA using the four ribonucleoside triphosphates as substrates. This Neisseria meningitidis serogroup C (strain 053442) protein is DNA-directed RNA polymerase subunit beta'.